A 98-amino-acid polypeptide reads, in one-letter code: Histone H4-like protein type G (98 aa).

The DNA-binding element occupies 17 to 21 (KCHRK).

The protein belongs to the histone H4 family. As to quaternary structure, the nucleosome is a histone octamer containing two molecules each of H2A, H2B, H3 and H4 assembled in one H3-H4 heterotetramer and two H2A-H2B heterodimers. The octamer wraps approximately 147 bp of DNA.

Its subcellular location is the nucleus. The protein localises to the chromosome. Functionally, core component of nucleosome. Nucleosomes wrap and compact DNA into chromatin, limiting DNA accessibility to the cellular machineries which require DNA as a template. Histones thereby play a central role in transcription regulation, DNA repair, DNA replication and chromosomal stability. DNA accessibility is regulated via a complex set of post-translational modifications of histones, also called histone code, and nucleosome remodeling. The sequence is that of Histone H4-like protein type G from Homo sapiens (Human).